Reading from the N-terminus, the 547-residue chain is Chaperonin GroEL (547 aa).

Residues 30 to 33, K51, 87 to 91, G415, and D496 each bind ATP; these read TLGP and DGTTT.

This sequence belongs to the chaperonin (HSP60) family. Forms a cylinder of 14 subunits composed of two heptameric rings stacked back-to-back. Interacts with the co-chaperonin GroES.

Its subcellular location is the cytoplasm. It carries out the reaction ATP + H2O + a folded polypeptide = ADP + phosphate + an unfolded polypeptide.. Functionally, together with its co-chaperonin GroES, plays an essential role in assisting protein folding. The GroEL-GroES system forms a nano-cage that allows encapsulation of the non-native substrate proteins and provides a physical environment optimized to promote and accelerate protein folding. The chain is Chaperonin GroEL from Actinobacillus pleuropneumoniae serotype 7 (strain AP76).